Consider the following 645-residue polypeptide: Crossover junction endonuclease mus-81 (645 aa).

Disordered regions lie at residues 98 to 119 and 219 to 310; these read LAAA…RTAR and GVAG…EDRK. Polar residues predominate over residues 223–252; it reads SANTSRNAIASGSGTSNPNRSENVNPNRQD. The segment covering 296-305 has biased composition (acidic residues); it reads DSDDEDPKYD. The ERCC4 domain occupies 353–459; the sequence is ELVLDTREVQ…NVVYIIENYN (107 aa).

This sequence belongs to the XPF family. Interacts with eme-1. Mg(2+) is required as a cofactor.

The protein resides in the nucleus. Functionally, interacts with eme-1 to form a DNA structure-specific endonuclease with substrate preference for branched DNA structures with a 5'-end at the branch nick. Typical substrates include 3'-flap structures, D-loops, replication forks and nicked Holliday junctions. May be required in mitosis for the processing of stalled or collapsed replication fork intermediates. May be required in meiosis for the repair of meiosis-specific double strand breaks subsequent to single-end invasion (SEI). The sequence is that of Crossover junction endonuclease mus-81 (mus-81) from Neurospora crassa (strain ATCC 24698 / 74-OR23-1A / CBS 708.71 / DSM 1257 / FGSC 987).